A 311-amino-acid polypeptide reads, in one-letter code: Succinate dehydrogenase [ubiquinone] iron-sulfur subunit 2, mitochondrial (311 aa).

A mitochondrion-targeting transit peptide spans 1–63 (MILRRTLPRL…EEIRDHRRGD (63 aa)). A disordered region spans residues 1-70 (MILRRTLPRL…RGDAAAASPA (70 aa)). Residues 51–63 (AKEEEIRDHRRGD) are compositionally biased toward basic and acidic residues. The 2Fe-2S ferredoxin-type domain maps to 77–168 (FRVYRWSPDA…ATTVTPLPHM (92 aa)). [2Fe-2S] cluster-binding residues include Cys128, Cys133, and Cys148. The 4Fe-4S ferredoxin-type domain occupies 211 to 241 (ERKRLDGLYECILCACCSAACPSYWWNAEAF). The [4Fe-4S] cluster site is built by Cys221, Cys224, and Cys227. Position 231 (Cys231) interacts with [3Fe-4S] cluster. Trp236 provides a ligand contact to a ubiquinone. [3Fe-4S] cluster is bound by residues Cys279 and Cys285. Cys289 provides a ligand contact to [4Fe-4S] cluster.

Belongs to the succinate dehydrogenase/fumarate reductase iron-sulfur protein family. As to quaternary structure, component of complex II composed of eight subunits in plants: four classical SDH subunits SDH1, SDH2, SDH3 and SDH4 (a flavoprotein (FP), an iron-sulfur protein (IP), and a cytochrome b composed of a large and a small subunit.), as well as four subunits unknown in mitochondria from bacteria and heterotrophic eukaryotes. Requires [2Fe-2S] cluster as cofactor. It depends on [3Fe-4S] cluster as a cofactor. The cofactor is [4Fe-4S] cluster.

It localises to the mitochondrion inner membrane. The enzyme catalyses a quinone + succinate = fumarate + a quinol. The protein operates within carbohydrate metabolism; tricarboxylic acid cycle; fumarate from succinate (eukaryal route): step 1/1. Functionally, iron-sulfur protein (IP) subunit of succinate dehydrogenase (SDH) that is involved in complex II of the mitochondrial electron transport chain and is responsible for transferring electrons from succinate to ubiquinone (coenzyme Q). The polypeptide is Succinate dehydrogenase [ubiquinone] iron-sulfur subunit 2, mitochondrial (Oryza sativa subsp. japonica (Rice)).